The sequence spans 60 residues: Large ribosomal subunit protein bL32 (60 aa).

Positions 1–60 (MAVQQVKKSRSKRDMRRSHDSLTNPTLSTDKSTGELHLRHHVSPNGFYKGRKVVDTKSED) are disordered. A compositionally biased stretch (basic residues) spans 7–16 (KKSRSKRDMR). The span at 22 to 31 (LTNPTLSTDK) shows a compositional bias: polar residues.

Belongs to the bacterial ribosomal protein bL32 family.

The sequence is that of Large ribosomal subunit protein bL32 from Francisella tularensis subsp. holarctica (strain LVS).